Reading from the N-terminus, the 525-residue chain is GMP synthase [glutamine-hydrolyzing] (525 aa).

Positions 9–207 (RILILDFGSQ…VLDICGCDAL (199 aa)) constitute a Glutamine amidotransferase type-1 domain. The active-site Nucleophile is the Cys86. Catalysis depends on residues His181 and Glu183. Residues 208-400 (WTSAAIIEDT…LGLPYDMLYR (193 aa)) form the GMPS ATP-PPase domain. Residue 235 to 241 (SGGVDSS) participates in ATP binding.

Homodimer.

The catalysed reaction is XMP + L-glutamine + ATP + H2O = GMP + L-glutamate + AMP + diphosphate + 2 H(+). It functions in the pathway purine metabolism; GMP biosynthesis; GMP from XMP (L-Gln route): step 1/1. Functionally, catalyzes the synthesis of GMP from XMP. In Proteus mirabilis (strain HI4320), this protein is GMP synthase [glutamine-hydrolyzing].